Here is a 370-residue protein sequence, read N- to C-terminus: Chorismate synthase (370 aa).

NADP(+) is bound by residues arginine 48 and arginine 54. FMN-binding positions include 130–132 (RSS), 242–243 (NA), glycine 287, 302–306 (KPTSS), and arginine 328.

This sequence belongs to the chorismate synthase family. As to quaternary structure, homotetramer. FMNH2 is required as a cofactor.

It catalyses the reaction 5-O-(1-carboxyvinyl)-3-phosphoshikimate = chorismate + phosphate. The protein operates within metabolic intermediate biosynthesis; chorismate biosynthesis; chorismate from D-erythrose 4-phosphate and phosphoenolpyruvate: step 7/7. Functionally, catalyzes the anti-1,4-elimination of the C-3 phosphate and the C-6 proR hydrogen from 5-enolpyruvylshikimate-3-phosphate (EPSP) to yield chorismate, which is the branch point compound that serves as the starting substrate for the three terminal pathways of aromatic amino acid biosynthesis. This reaction introduces a second double bond into the aromatic ring system. The protein is Chorismate synthase of Xanthobacter autotrophicus (strain ATCC BAA-1158 / Py2).